The primary structure comprises 315 residues: 4-hydroxy-3-methylbut-2-enyl diphosphate reductase (315 aa).

Cys-12 is a binding site for [4Fe-4S] cluster. (2E)-4-hydroxy-3-methylbut-2-enyl diphosphate-binding residues include His-41 and His-74. Dimethylallyl diphosphate contacts are provided by His-41 and His-74. Residues His-41 and His-74 each coordinate isopentenyl diphosphate. Cys-96 provides a ligand contact to [4Fe-4S] cluster. His-124 lines the (2E)-4-hydroxy-3-methylbut-2-enyl diphosphate pocket. A dimethylallyl diphosphate-binding site is contributed by His-124. His-124 serves as a coordination point for isopentenyl diphosphate. Glu-126 serves as the catalytic Proton donor. Thr-168 is a binding site for (2E)-4-hydroxy-3-methylbut-2-enyl diphosphate. [4Fe-4S] cluster is bound at residue Cys-198. Residues Ser-226, Ser-227, Asn-228, and Ser-270 each coordinate (2E)-4-hydroxy-3-methylbut-2-enyl diphosphate. Residues Ser-226, Ser-227, Asn-228, and Ser-270 each contribute to the dimethylallyl diphosphate site. Positions 226, 227, 228, and 270 each coordinate isopentenyl diphosphate.

Belongs to the IspH family. Requires [4Fe-4S] cluster as cofactor.

It catalyses the reaction isopentenyl diphosphate + 2 oxidized [2Fe-2S]-[ferredoxin] + H2O = (2E)-4-hydroxy-3-methylbut-2-enyl diphosphate + 2 reduced [2Fe-2S]-[ferredoxin] + 2 H(+). The catalysed reaction is dimethylallyl diphosphate + 2 oxidized [2Fe-2S]-[ferredoxin] + H2O = (2E)-4-hydroxy-3-methylbut-2-enyl diphosphate + 2 reduced [2Fe-2S]-[ferredoxin] + 2 H(+). It participates in isoprenoid biosynthesis; dimethylallyl diphosphate biosynthesis; dimethylallyl diphosphate from (2E)-4-hydroxy-3-methylbutenyl diphosphate: step 1/1. It functions in the pathway isoprenoid biosynthesis; isopentenyl diphosphate biosynthesis via DXP pathway; isopentenyl diphosphate from 1-deoxy-D-xylulose 5-phosphate: step 6/6. In terms of biological role, catalyzes the conversion of 1-hydroxy-2-methyl-2-(E)-butenyl 4-diphosphate (HMBPP) into a mixture of isopentenyl diphosphate (IPP) and dimethylallyl diphosphate (DMAPP). Acts in the terminal step of the DOXP/MEP pathway for isoprenoid precursor biosynthesis. This chain is 4-hydroxy-3-methylbut-2-enyl diphosphate reductase, found in Pseudomonas entomophila (strain L48).